The chain runs to 174 residues: MAPTVMASSATSVAPFQGLKSTAGLPVSRRSNASSASVSNGGRIRCMQVWPIEGIKKFETLSYLPPLSTEALLKQVDYLIRSKWVPCLEFSKVGFIFREHNASPGYYDGRYWTMWKLPMFGCTDATQVLNEVEEVKKEYPDAYVRIIGFDNMRQVQCVSFIAFKPPGCQESGKA.

The N-terminal 45 residues, 1–45 (MAPTVMASSATSVAPFQGLKSTAGLPVSRRSNASSASVSNGGRIR), are a transit peptide targeting the chloroplast.

It belongs to the RuBisCO small chain family. As to quaternary structure, heterohexadecamer of 8 large and 8 small subunits.

It localises to the plastid. It is found in the chloroplast. In terms of biological role, ruBisCO catalyzes two reactions: the carboxylation of D-ribulose 1,5-bisphosphate, the primary event in carbon dioxide fixation, as well as the oxidative fragmentation of the pentose substrate. Both reactions occur simultaneously and in competition at the same active site. Although the small subunit is not catalytic it is essential for maximal activity. This chain is Ribulose bisphosphate carboxylase small subunit, chloroplastic, found in Hordeum vulgare (Barley).